The sequence spans 119 residues: MSQRQQRVADLIHQQLAELLKKEVRDSRLSKISLTAVSISPDLKQAKVFYSLLENQNEKEVQKALNKATGYLRHLLAQATVLRYVPKLEFVYDESIERAHRISFLIERALKKDDSDESS.

It belongs to the RbfA family. As to quaternary structure, monomer. Binds 30S ribosomal subunits, but not 50S ribosomal subunits or 70S ribosomes.

The protein resides in the cytoplasm. Its function is as follows. One of several proteins that assist in the late maturation steps of the functional core of the 30S ribosomal subunit. Associates with free 30S ribosomal subunits (but not with 30S subunits that are part of 70S ribosomes or polysomes). Required for efficient processing of 16S rRNA. May interact with the 5'-terminal helix region of 16S rRNA. In Coxiella burnetii (strain CbuG_Q212) (Coxiella burnetii (strain Q212)), this protein is Ribosome-binding factor A.